Reading from the N-terminus, the 238-residue chain is DNA repair protein RecO (238 aa).

This sequence belongs to the RecO family.

In terms of biological role, involved in DNA repair and RecF pathway recombination. This chain is DNA repair protein RecO, found in Flavobacterium psychrophilum (strain ATCC 49511 / DSM 21280 / CIP 103535 / JIP02/86).